The chain runs to 82 residues: Sec-independent protein translocase protein TatA (82 aa).

The helical transmembrane segment at 1-21 (MGSLSIWHWLIVGAVVLLVFG) threads the bilayer. Residues 43–82 (GLSEDEEKAEAKPVGEPSLRSLDHQGAGDPLKTPDARKIG) are disordered.

The protein belongs to the TatA/E family. As to quaternary structure, the Tat system comprises two distinct complexes: a TatABC complex, containing multiple copies of TatA, TatB and TatC subunits, and a separate TatA complex, containing only TatA subunits. Substrates initially bind to the TatABC complex, which probably triggers association of the separate TatA complex to form the active translocon.

The protein localises to the cell inner membrane. Part of the twin-arginine translocation (Tat) system that transports large folded proteins containing a characteristic twin-arginine motif in their signal peptide across membranes. TatA could form the protein-conducting channel of the Tat system. This is Sec-independent protein translocase protein TatA from Methylocella silvestris (strain DSM 15510 / CIP 108128 / LMG 27833 / NCIMB 13906 / BL2).